Reading from the N-terminus, the 308-residue chain is Transcriptional adapter 1-1 (308 aa).

It belongs to the TADA1 family. In terms of assembly, component of the Spt-Ada-Gcn5 acetyltransferase (SAGA) complex consisting of wda/Taf5L, Saf6, Taf9, Taf10b, Taf12, Ada1, Spt3, Spt7, Spt20, Sf3b3, Sf3b5, Nipped-A/Tra1, a histone acetyltransferase (HAT) module made up of Gcn5, Ada2b (Isoform B), Ada3 and Sgf29, and a deubiquitinase (DUB) module made up of not/nonstop, Sgf11 and e(y)2 tethered to SAGA by Atxn7. Not a component of the Ada2a-containing ATAC complex.

It localises to the nucleus. Component of the transcription regulatory complex SAGA, a multiprotein complex that activates transcription by remodeling chromatin and mediating histone acetylation and deubiquitination. The SAGA complex predominantly acetylates histone H3. The chain is Transcriptional adapter 1-1 from Drosophila melanogaster (Fruit fly).